Here is a 556-residue protein sequence, read N- to C-terminus: Formate--tetrahydrofolate ligase (556 aa).

Residue 65–72 (TPAGEGKS) participates in ATP binding.

It belongs to the formate--tetrahydrofolate ligase family.

The enzyme catalyses (6S)-5,6,7,8-tetrahydrofolate + formate + ATP = (6R)-10-formyltetrahydrofolate + ADP + phosphate. It participates in one-carbon metabolism; tetrahydrofolate interconversion. The sequence is that of Formate--tetrahydrofolate ligase from Streptococcus agalactiae serotype Ia (strain ATCC 27591 / A909 / CDC SS700).